The primary structure comprises 294 residues: Cytidine deaminase (294 aa).

2 consecutive CMP/dCMP-type deaminase domains span residues 48 to 168 (DDDA…FGPT) and 187 to 294 (AETD…RVTF). 89 to 91 (NME) provides a ligand contact to substrate. A Zn(2+)-binding site is contributed by histidine 102. Catalysis depends on glutamate 104, which acts as the Proton donor. Positions 129 and 132 each coordinate Zn(2+).

Belongs to the cytidine and deoxycytidylate deaminase family. As to quaternary structure, homodimer. It depends on Zn(2+) as a cofactor.

It catalyses the reaction cytidine + H2O + H(+) = uridine + NH4(+). The catalysed reaction is 2'-deoxycytidine + H2O + H(+) = 2'-deoxyuridine + NH4(+). In terms of biological role, this enzyme scavenges exogenous and endogenous cytidine and 2'-deoxycytidine for UMP synthesis. This chain is Cytidine deaminase, found in Yersinia pseudotuberculosis serotype IB (strain PB1/+).